Reading from the N-terminus, the 543-residue chain is Plant intracellular Ras-group-related LRR protein 5 (543 aa).

LRR repeat units lie at residues 239 to 262 (LQDVTELDLSENRIMALPSTIGSL), 264 to 284 (YLTKLDLHSNQLINLPDAFGE), 285 to 307 (LSNLIDLDLHANQLKSLPSSFGN), 309 to 331 (TSLANLDLSSNMLKALPDCLGKL), 332 to 354 (ANLRRLIVETNELEELPYTIGSC), 356 to 377 (SLVELRLDFNQLKALPEAIGKL), 378 to 400 (EKLEILTLHYNRIKGLPTTVGSL), 402 to 424 (RLRELDVSFNEVEVIPENICFAT), 426 to 448 (LVKLNLSRNFADLRALPKSIGNL), and 449 to 470 (EMLEELDISSNQIRVLPDSFRC). The LRR 11; degenerate repeat unit spans residues 472–494 (SRLRVFHADETPLEFPPREVVKL). Positions 495-502 (GAQAVVKY) match the GVYW; degenerate motif.

The protein belongs to the SHOC2 family. Widely expressed.

Leucine-rich repeat protein that likely mediates protein interactions, possibly in the context of signal transduction. The sequence is that of Plant intracellular Ras-group-related LRR protein 5 (IRL5) from Oryza sativa subsp. japonica (Rice).